Here is a 142-residue protein sequence, read N- to C-terminus: MRKKHLKAALGEAQYKVSMLSEENNRLAIENQDKDYRITNLLGEVEVVREANVKLSQRLNEVLAANRRYAIKQRTQNELFGKALAQVKPETGPSRPNRKKLTEREVKDIRQAYLGGMKQKDLAENYGVNPATISRTVRGIYH.

The segment at 82–101 (KALAQVKPETGPSRPNRKKL) is disordered.

This is Gene 46 protein (46) from Mycobacterium (Mycobacteriophage L5).